Here is a 146-residue protein sequence, read N- to C-terminus: Hemoglobin subunit beta (146 aa).

Val1 is modified (N-acetylvaline). The region spanning His2 to His146 is the Globin domain. Lys59 carries the N6-acetyllysine modification. A heme b-binding site is contributed by His63. Lys82 carries the post-translational modification N6-acetyllysine. His92 contributes to the heme b binding site. Cys93 bears the S-nitrosocysteine mark. Lys144 is subject to N6-acetyllysine.

The protein belongs to the globin family. In terms of assembly, heterotetramer of two alpha chains and two beta chains. As to expression, red blood cells.

In terms of biological role, involved in oxygen transport from the lung to the various peripheral tissues. This is Hemoglobin subunit beta (HBB) from Trichechus inunguis (Amazon manatee).